The chain runs to 324 residues: tRNA dimethylallyltransferase (324 aa).

An ATP-binding site is contributed by 17–24; the sequence is GPTASGKT. Residue 19 to 24 participates in substrate binding; it reads TASGKT. 4 interaction with substrate tRNA regions span residues 42–45, 166–170, 251–256, and 284–291; these read DSAL, QRIQR, RCVGYR, and KRQITWLR.

It belongs to the IPP transferase family. Monomer. Mg(2+) is required as a cofactor.

It catalyses the reaction adenosine(37) in tRNA + dimethylallyl diphosphate = N(6)-dimethylallyladenosine(37) in tRNA + diphosphate. In terms of biological role, catalyzes the transfer of a dimethylallyl group onto the adenine at position 37 in tRNAs that read codons beginning with uridine, leading to the formation of N6-(dimethylallyl)adenosine (i(6)A). This Burkholderia ambifaria (strain MC40-6) protein is tRNA dimethylallyltransferase.